The following is a 299-amino-acid chain: tRNA dimethylallyltransferase (299 aa).

An ATP-binding site is contributed by 13-20; it reads GPTASGKT. 15–20 contacts substrate; that stretch reads TASGKT. The interaction with substrate tRNA stretch occupies residues 38–41; sequence DSRQ.

The protein belongs to the IPP transferase family. As to quaternary structure, monomer. It depends on Mg(2+) as a cofactor.

The catalysed reaction is adenosine(37) in tRNA + dimethylallyl diphosphate = N(6)-dimethylallyladenosine(37) in tRNA + diphosphate. In terms of biological role, catalyzes the transfer of a dimethylallyl group onto the adenine at position 37 in tRNAs that read codons beginning with uridine, leading to the formation of N6-(dimethylallyl)adenosine (i(6)A). This Prochlorococcus marinus (strain MIT 9211) protein is tRNA dimethylallyltransferase.